The primary structure comprises 554 residues: MRSDVIKKGLERAPHRSLLKALGITDDEMRRPFIGIVSSWNEIIPGHVHLDKVVEAVKAGVRMAGGVPFVFPTIGICDGIAMDHRGMKFSLPSRELIADSIEIVASGFPFDGLVFVPNCDKITPGMMMAMGRLNIPSVLISGGPMLAGRYNGRDIDLITVFEAVGGYKVGKVDEETLKAIEDLACPGAGSCAGLFTANTMNSLAEALGIAPRGNGTVPAVHAKRLRMAKEAGILVVELVKRDIKPRDIVTLDSFMNAVMVDLATGGSTNTVLHLKAIAESFGIDFDIKLFDELSRKIPHICNISPVGPYHIQDLDDAGGIYAVMKRLQENGLLKEDVMTIYLRKIGDLVREAKILNEDVIRPFDNPYHKEGGLGILFGNLAPEGAVAKLSGVPEKMMHHVGPAVVFEDGEEATKAILSGKIKKGDVVVIRYEGPKGGPGMREMLSPTSAIVGMGLAEDVALITDGRFSGGSHGAVIGHVSPEAAEGGPIGIVKDGDLIEIDFEKRTLNLLISDEEFERRMKEFTPLVKEVDSDYLRRYAFFVQSASKGATFRKP.

Asp-78 serves as a coordination point for Mg(2+). Cys-119 is a [2Fe-2S] cluster binding site. The Mg(2+) site is built by Asp-120 and Lys-121. An N6-carboxylysine modification is found at Lys-121. Cys-191 serves as a coordination point for [2Fe-2S] cluster. Residue Glu-442 participates in Mg(2+) binding. Residue Ser-468 is the Proton acceptor of the active site.

Belongs to the IlvD/Edd family. As to quaternary structure, homodimer. Requires [2Fe-2S] cluster as cofactor. Mg(2+) serves as cofactor.

The enzyme catalyses (2R)-2,3-dihydroxy-3-methylbutanoate = 3-methyl-2-oxobutanoate + H2O. The catalysed reaction is (2R,3R)-2,3-dihydroxy-3-methylpentanoate = (S)-3-methyl-2-oxopentanoate + H2O. It participates in amino-acid biosynthesis; L-isoleucine biosynthesis; L-isoleucine from 2-oxobutanoate: step 3/4. It functions in the pathway amino-acid biosynthesis; L-valine biosynthesis; L-valine from pyruvate: step 3/4. Functions in the biosynthesis of branched-chain amino acids. Catalyzes the dehydration of (2R,3R)-2,3-dihydroxy-3-methylpentanoate (2,3-dihydroxy-3-methylvalerate) into 2-oxo-3-methylpentanoate (2-oxo-3-methylvalerate) and of (2R)-2,3-dihydroxy-3-methylbutanoate (2,3-dihydroxyisovalerate) into 2-oxo-3-methylbutanoate (2-oxoisovalerate), the penultimate precursor to L-isoleucine and L-valine, respectively. The polypeptide is Dihydroxy-acid dehydratase (Thermotoga sp. (strain RQ2)).